The following is a 178-amino-acid chain: ATP synthase subunit delta (178 aa).

Belongs to the ATPase delta chain family. In terms of assembly, F-type ATPases have 2 components, F(1) - the catalytic core - and F(0) - the membrane proton channel. F(1) has five subunits: alpha(3), beta(3), gamma(1), delta(1), epsilon(1). F(0) has three main subunits: a(1), b(2) and c(10-14). The alpha and beta chains form an alternating ring which encloses part of the gamma chain. F(1) is attached to F(0) by a central stalk formed by the gamma and epsilon chains, while a peripheral stalk is formed by the delta and b chains.

Its subcellular location is the cell membrane. F(1)F(0) ATP synthase produces ATP from ADP in the presence of a proton or sodium gradient. F-type ATPases consist of two structural domains, F(1) containing the extramembraneous catalytic core and F(0) containing the membrane proton channel, linked together by a central stalk and a peripheral stalk. During catalysis, ATP synthesis in the catalytic domain of F(1) is coupled via a rotary mechanism of the central stalk subunits to proton translocation. Its function is as follows. This protein is part of the stalk that links CF(0) to CF(1). It either transmits conformational changes from CF(0) to CF(1) or is implicated in proton conduction. The protein is ATP synthase subunit delta of Streptococcus pyogenes serotype M4 (strain MGAS10750).